We begin with the raw amino-acid sequence, 91 residues long: Large ribosomal subunit protein bL27 (91 aa).

The interval 1 to 25 (MAHKKGAASSNNGRDSESKRLGVKR) is disordered.

It belongs to the bacterial ribosomal protein bL27 family.

The sequence is that of Large ribosomal subunit protein bL27 from Corynebacterium kroppenstedtii (strain DSM 44385 / JCM 11950 / CIP 105744 / CCUG 35717).